The chain runs to 180 residues: Large ribosomal subunit protein uL16 (180 aa).

It belongs to the universal ribosomal protein uL16 family.

In Thermococcus sibiricus (strain DSM 12597 / MM 739), this protein is Large ribosomal subunit protein uL16.